The chain runs to 311 residues: Bifunctional protein FolD (311 aa).

NADP(+) is bound at residue 174-176 (GKG).

It belongs to the tetrahydrofolate dehydrogenase/cyclohydrolase family. As to quaternary structure, homodimer.

It carries out the reaction (6R)-5,10-methylene-5,6,7,8-tetrahydrofolate + NADP(+) = (6R)-5,10-methenyltetrahydrofolate + NADPH. The catalysed reaction is (6R)-5,10-methenyltetrahydrofolate + H2O = (6R)-10-formyltetrahydrofolate + H(+). It participates in one-carbon metabolism; tetrahydrofolate interconversion. Functionally, catalyzes the oxidation of 5,10-methylenetetrahydrofolate to 5,10-methenyltetrahydrofolate and then the hydrolysis of 5,10-methenyltetrahydrofolate to 10-formyltetrahydrofolate. The sequence is that of Bifunctional protein FolD from Pyrobaculum neutrophilum (strain DSM 2338 / JCM 9278 / NBRC 100436 / V24Sta) (Thermoproteus neutrophilus).